The chain runs to 483 residues: MTPETDALKVQILPKHQSLPYTVTKAKSKSLILLVVVSVTITLGLLLYVFNSNSVISSGSLLSRRCKLRYSVLIDAGSSGTRVHVFGYWFESGKPVFDFGEKHYANLKLTPGLSSYADNPEGASVSVTKLVEFAKQRIPKRMFRRSDIRLMATAGMRLLEVPVQEQILEVTRRVLRSSGFMFRDEWANVISGSDEGIYSWITANYALGSLGTDPLETTGIVELGGASAQVTFVSSEHVPPEYSRTIAYGNISYTIYSHSFLDYGKDAALKKLLEKLQNSANSTVDGVVEDPCTPKGYIYDTNSKNYSSGFLADESKLKGSLQAAGNFSKCRSATFALLKEGKENCLYEHCSIGSTFTPDLQGSFLATASFYYTAKFFELEEKGWLSELIPAGKRYCGEEWSKLILEYPTTDEEYLRGYCFSAAYTISMLHDSLGIALDDESITYASKAGEKHIPLDWALGAFILDVVTPNSDYNGKSRKYLGF.

Topologically, residues 1–29 are cytoplasmic; the sequence is MTPETDALKVQILPKHQSLPYTVTKAKSK. A helical; Signal-anchor for type II membrane protein membrane pass occupies residues 30 to 50; that stretch reads SLILLVVVSVTITLGLLLYVF. The Extracellular segment spans residues 51-483; that stretch reads NSNSVISSGS…NGKSRKYLGF (433 aa). 72 to 82 is a binding site for ATP; the sequence is VLIDAGSSGTR. The Proton acceptor role is filled by Glu-195. Residue 219-229 coordinates ATP; that stretch reads GIVELGGASAQ. Asn-250, Asn-281, Asn-305, and Asn-326 each carry an N-linked (GlcNAc...) asparagine glycan.

It belongs to the GDA1/CD39 NTPase family. Ca(2+) is required as a cofactor. Expressed in the initiation zone of lateral root and in the lateral root tip, the adaxial junction of lateral shoots with the stems, and in the abscission zone of flower organs. Not expressed in the rosette leaves.

The protein resides in the membrane. The catalysed reaction is a ribonucleoside 5'-triphosphate + 2 H2O = a ribonucleoside 5'-phosphate + 2 phosphate + 2 H(+). Its function is as follows. Catalyzes the hydrolysis of phosphoanhydride bonds of nucleoside tri- and di-phosphates. This Arabidopsis thaliana (Mouse-ear cress) protein is Probable apyrase 3 (APY3).